Here is a 211-residue protein sequence, read N- to C-terminus: QFKRRAKYKREPVSLTLALLLGGLTMGGIAAGVGTGTTALVATQQFQQLQAAMHDDLKKVEKSITNLEKSLTSLSEVVLQNRRGLDLLFLKEGGLCAALKEECCFYADHTGLVRDSMAKLRERLSQRQKLFESQQGWFEGLFNKSPWFTTLISTIMGPLIILLLILLFGPCILNRLVQFIKDRISVVQALVLTQQYHQLKSIDPEKVESRE.

Topologically, residues 1–151 (QFKRRAKYKR…FNKSPWFTTL (151 aa)) are extracellular. Positions 13-33 (VSLTLALLLGGLTMGGIAAGV) are fusion peptide. Coiled-coil stretches lie at residues 41 to 90 (VATQ…LLFL) and 100 to 136 (KEEC…SQQG). The tract at residues 79–95 (LQNRRGLDLLFLKEGGL) is immunosuppression. A CX6CC motif is present at residues 96–104 (CAALKEECC). A helical transmembrane segment spans residues 152-172 (ISTIMGPLIILLLILLFGPCI). Cys171 carries S-palmitoyl cysteine; by host lipidation. Residues 173-211 (LNRLVQFIKDRISVVQALVLTQQYHQLKSIDPEKVESRE) lie on the Cytoplasmic side of the membrane. Positions 196 to 199 (YHQL) match the YXXL motif; contains endocytosis signal motif.

The mature envelope protein (Env) consists of a trimer of SU-TM heterodimers attached by a labile interchain disulfide bond. Post-translationally, specific enzymatic cleavages in vivo yield mature proteins. Envelope glycoproteins are synthesized as an inactive precursor that is N-glycosylated and processed likely by host cell furin or by a furin-like protease in the Golgi to yield the mature SU and TM proteins. The cleavage site between SU and TM requires the minimal sequence [KR]-X-[KR]-R. The R-peptide is released from the C-terminus of the cytoplasmic tail of the TM protein upon particle formation as a result of proteolytic cleavage by the viral protease. Cleavage of this peptide is required for TM to become fusogenic. In terms of processing, the CXXC motif is highly conserved across a broad range of retroviral envelope proteins. It is thought to participate in the formation of a labile disulfide bond possibly with the CX6CC motif present in the transmembrane protein. Isomerization of the intersubunit disulfide bond to an SU intrachain disulfide bond is thought to occur upon receptor recognition in order to allow membrane fusion. The transmembrane protein is palmitoylated. Post-translationally, the R-peptide is palmitoylated.

The protein localises to the virion membrane. Its subcellular location is the host cell membrane. Functionally, the surface protein (SU) attaches the virus to the host cell by binding to its receptor. This interaction triggers the refolding of the transmembrane protein (TM) and is thought to activate its fusogenic potential by unmasking its fusion peptide. Fusion occurs at the host cell plasma membrane. The transmembrane protein (TM) acts as a class I viral fusion protein. Under the current model, the protein has at least 3 conformational states: pre-fusion native state, pre-hairpin intermediate state, and post-fusion hairpin state. During viral and target cell membrane fusion, the coiled coil regions (heptad repeats) assume a trimer-of-hairpins structure, positioning the fusion peptide in close proximity to the C-terminal region of the ectodomain. The formation of this structure appears to drive apposition and subsequent fusion of viral and target cell membranes. Membranes fusion leads to delivery of the nucleocapsid into the cytoplasm. This chain is Envelope glycoprotein (env), found in Mus musculus (Mouse).